A 193-amino-acid polypeptide reads, in one-letter code: Peptidyl-tRNA hydrolase (193 aa).

Tyr17 serves as a coordination point for tRNA. Residue His22 is the Proton acceptor of the active site. TRNA is bound by residues Tyr68, Asn70, and Asn116.

The protein belongs to the PTH family. As to quaternary structure, monomer.

Its subcellular location is the cytoplasm. The enzyme catalyses an N-acyl-L-alpha-aminoacyl-tRNA + H2O = an N-acyl-L-amino acid + a tRNA + H(+). Functionally, hydrolyzes ribosome-free peptidyl-tRNAs (with 1 or more amino acids incorporated), which drop off the ribosome during protein synthesis, or as a result of ribosome stalling. Catalyzes the release of premature peptidyl moieties from peptidyl-tRNA molecules trapped in stalled 50S ribosomal subunits, and thus maintains levels of free tRNAs and 50S ribosomes. The protein is Peptidyl-tRNA hydrolase of Acinetobacter baumannii (strain AB0057).